The chain runs to 200 residues: MAQQRALPQSKETLLQSYNKRLKDDIKSIMDNFTEIIKTAKIEDETQVSRATQGEQDNYEMHVRAANIVRAGESLMKLVSDLKQFLILNDFPSVNEAIDQRNQQLRTLQEECDRKLITLRDEISIDLYELEEEYYSSSSSLCEANDLPLCEAYGRLDLDTDSADGLSAPLLASPEPSAGPLQVAAPAHSHAGGPGPTEHA.

A coiled-coil region spans residues 93–122 (SVNEAIDQRNQQLRTLQEECDRKLITLRDE). Positions 166 to 200 (LSAPLLASPEPSAGPLQVAAPAHSHAGGPGPTEHA) are disordered.

It belongs to the Mediator complex subunit 22 family. As to quaternary structure, component of the Mediator complex, which is composed of MED1, MED4, MED6, MED7, MED8, MED9, MED10, MED11, MED12, MED13, MED13L, MED14, MED15, MED16, MED17, MED18, MED19, MED20, MED21, MED22, MED23, MED24, MED25, MED26, MED27, MED29, MED30, MED31, CCNC, CDK8 and CDC2L6/CDK11. The MED12, MED13, CCNC and CDK8 subunits form a distinct module termed the CDK8 module. Mediator containing the CDK8 module is less active than Mediator lacking this module in supporting transcriptional activation. Individual preparations of the Mediator complex lacking one or more distinct subunits have been variously termed ARC, CRSP, DRIP, PC2, SMCC and TRAP.

The protein localises to the nucleus. In terms of biological role, component of the Mediator complex, a coactivator involved in the regulated transcription of nearly all RNA polymerase II-dependent genes. Mediator functions as a bridge to convey information from gene-specific regulatory proteins to the basal RNA polymerase II transcription machinery. Mediator is recruited to promoters by direct interactions with regulatory proteins and serves as a scaffold for the assembly of a functional preinitiation complex with RNA polymerase II and the general transcription factors. In Homo sapiens (Human), this protein is Mediator of RNA polymerase II transcription subunit 22 (MED22).